Here is a 228-residue protein sequence, read N- to C-terminus: Ribonuclease 3 1 (228 aa).

Positions 1 to 124 (MYKLLMFRDD…VIGAYYLDNN (124 aa)) constitute an RNase III domain. Glu-37 contacts Mg(2+). Asp-41 is an active-site residue. Ser-110 and Glu-113 together coordinate Mg(2+). Glu-113 is an active-site residue. The 71-residue stretch at 153 to 223 (DSKNRFQEWV…AENALANLNK (71 aa)) folds into the DRBM domain.

Belongs to the ribonuclease III family. Homodimer. Mg(2+) serves as cofactor.

The protein resides in the cytoplasm. It catalyses the reaction Endonucleolytic cleavage to 5'-phosphomonoester.. Digests double-stranded RNA. Involved in the processing of primary rRNA transcript to yield the immediate precursors to the large and small rRNAs (23S and 16S). Processes some mRNAs, and tRNAs when they are encoded in the rRNA operon. Processes pre-crRNA and tracrRNA of type II CRISPR loci if present in the organism. In Nostoc sp. (strain PCC 7120 / SAG 25.82 / UTEX 2576), this protein is Ribonuclease 3 1.